Consider the following 59-residue polypeptide: DNA gyrase inhibitor YacG (59 aa).

Zn(2+) is bound by residues cysteine 9, cysteine 12, cysteine 27, and cysteine 31.

Belongs to the DNA gyrase inhibitor YacG family. As to quaternary structure, interacts with GyrB. The cofactor is Zn(2+).

Its function is as follows. Inhibits all the catalytic activities of DNA gyrase by preventing its interaction with DNA. Acts by binding directly to the C-terminal domain of GyrB, which probably disrupts DNA binding by the gyrase. This chain is DNA gyrase inhibitor YacG, found in Geotalea daltonii (strain DSM 22248 / JCM 15807 / FRC-32) (Geobacter daltonii).